The chain runs to 112 residues: Pediocin PA-1 immunity protein (112 aa).

Functionally, imparts immunity to pediocin PA-1/ACH to naturally sensitive host strains. The chain is Pediocin PA-1 immunity protein (pedB) from Pediococcus acidilactici.